A 430-amino-acid chain; its full sequence is Enolase (430 aa).

Position 165 (Gln-165) interacts with (2R)-2-phosphoglycerate. Glu-207 acts as the Proton donor in catalysis. The Mg(2+) site is built by Asp-244, Glu-287, and Asp-314. (2R)-2-phosphoglycerate contacts are provided by Lys-339, Arg-368, Ser-369, and Lys-390. The active-site Proton acceptor is Lys-339.

This sequence belongs to the enolase family. In terms of assembly, component of the RNA degradosome, a multiprotein complex involved in RNA processing and mRNA degradation. It depends on Mg(2+) as a cofactor.

The protein resides in the cytoplasm. It is found in the secreted. It localises to the cell surface. The catalysed reaction is (2R)-2-phosphoglycerate = phosphoenolpyruvate + H2O. It functions in the pathway carbohydrate degradation; glycolysis; pyruvate from D-glyceraldehyde 3-phosphate: step 4/5. Catalyzes the reversible conversion of 2-phosphoglycerate (2-PG) into phosphoenolpyruvate (PEP). It is essential for the degradation of carbohydrates via glycolysis. This chain is Enolase, found in Xanthomonas campestris pv. campestris (strain 8004).